The primary structure comprises 126 residues: Glycine cleavage system H protein (126 aa).

Residues T24 to K105 form the Lipoyl-binding domain. An N6-lipoyllysine modification is found at K65.

It belongs to the GcvH family. The glycine cleavage system is composed of four proteins: P, T, L and H. Requires (R)-lipoate as cofactor.

In terms of biological role, the glycine cleavage system catalyzes the degradation of glycine. The H protein shuttles the methylamine group of glycine from the P protein to the T protein. The polypeptide is Glycine cleavage system H protein (Burkholderia cenocepacia (strain ATCC BAA-245 / DSM 16553 / LMG 16656 / NCTC 13227 / J2315 / CF5610) (Burkholderia cepacia (strain J2315))).